Consider the following 250-residue polypeptide: Ribosomal RNA small subunit methyltransferase J (250 aa).

Residues 101 to 102 (RD), 117 to 118 (ER), 153 to 154 (SS), and Asp-171 each bind S-adenosyl-L-methionine.

It belongs to the methyltransferase superfamily. RsmJ family.

The protein localises to the cytoplasm. The enzyme catalyses guanosine(1516) in 16S rRNA + S-adenosyl-L-methionine = N(2)-methylguanosine(1516) in 16S rRNA + S-adenosyl-L-homocysteine + H(+). Specifically methylates the guanosine in position 1516 of 16S rRNA. In Cronobacter sakazakii (strain ATCC BAA-894) (Enterobacter sakazakii), this protein is Ribosomal RNA small subunit methyltransferase J.